The chain runs to 326 residues: ATP synthase subunit gamma, mitochondrial (326 aa).

Residues 1–45 constitute a mitochondrion transit peptide; it reads MAMAALRREGRRLAAAPFTSPTPLNALRSSLVSPSEEIGLSGVRS.

This sequence belongs to the ATPase gamma chain family. F-type ATPases have 2 components, CF(1) - the catalytic core - and CF(0) - the membrane proton channel. CF(1) has five subunits: alpha(3), beta(3), gamma(1), delta(1), epsilon(1). CF(0) has three main subunits: a, b and c.

It localises to the mitochondrion. It is found in the mitochondrion inner membrane. Functionally, mitochondrial membrane ATP synthase (F(1)F(0) ATP synthase or Complex V) produces ATP from ADP in the presence of a proton gradient across the membrane which is generated by electron transport complexes of the respiratory chain. F-type ATPases consist of two structural domains, F(1) - containing the extramembraneous catalytic core, and F(0) - containing the membrane proton channel, linked together by a central stalk and a peripheral stalk. During catalysis, ATP synthesis in the catalytic domain of F(1) is coupled via a rotary mechanism of the central stalk subunits to proton translocation. Part of the complex F(1) domain and the central stalk which is part of the complex rotary element. The gamma subunit protrudes into the catalytic domain formed of alpha(3)beta(3). Rotation of the central stalk against the surrounding alpha(3)beta(3) subunits leads to hydrolysis of ATP in three separate catalytic sites on the beta subunits. The sequence is that of ATP synthase subunit gamma, mitochondrial (ATPC) from Ipomoea batatas (Sweet potato).